Reading from the N-terminus, the 286-residue chain is Bifunctional protein FolD (286 aa).

NADP(+) is bound by residues 165 to 167 and Ser-190; that span reads GRS.

This sequence belongs to the tetrahydrofolate dehydrogenase/cyclohydrolase family. Homodimer.

It carries out the reaction (6R)-5,10-methylene-5,6,7,8-tetrahydrofolate + NADP(+) = (6R)-5,10-methenyltetrahydrofolate + NADPH. The enzyme catalyses (6R)-5,10-methenyltetrahydrofolate + H2O = (6R)-10-formyltetrahydrofolate + H(+). It participates in one-carbon metabolism; tetrahydrofolate interconversion. In terms of biological role, catalyzes the oxidation of 5,10-methylenetetrahydrofolate to 5,10-methenyltetrahydrofolate and then the hydrolysis of 5,10-methenyltetrahydrofolate to 10-formyltetrahydrofolate. The sequence is that of Bifunctional protein FolD from Burkholderia orbicola (strain MC0-3).